The sequence spans 274 residues: Anamorsin homolog (274 aa).

Residues 1-154 (MDRTRKQCSV…KKPSWKIGSS (154 aa)) are N-terminal SAM-like domain. The segment at 154-185 (SFALKKSTKGSVKVNLDDDLIDEDSLLTEEDM) is linker. The [2Fe-2S] cluster site is built by Cys-196, Cys-205, Cys-208, and Cys-210. Residues 196-210 (CEVGSTRKACKNCTC) form a fe-S binding site A region. [4Fe-4S] cluster is bound by residues Cys-235, Cys-238, Cys-246, and Cys-249. 2 consecutive short sequence motifs (cx2C motif) follow at residues 235 to 238 (CGSC) and 246 to 249 (CSTC). The fe-S binding site B stretch occupies residues 235 to 249 (CGSCGLGDAFRCSTC).

This sequence belongs to the anamorsin family. Monomer. The cofactor is [2Fe-2S] cluster. [4Fe-4S] cluster is required as a cofactor.

The protein localises to the cytoplasm. It localises to the mitochondrion intermembrane space. Component of the cytosolic iron-sulfur (Fe-S) protein assembly (CIA) machinery. Required for the maturation of extramitochondrial Fe-S proteins. Part of an electron transfer chain functioning in an early step of cytosolic Fe-S biogenesis, facilitating the de novo assembly of a [4Fe-4S] cluster on the cytosolic Fe-S scaffold complex. Electrons are transferred from NADPH via a FAD- and FMN-containing diflavin oxidoreductase. Together with the diflavin oxidoreductase, also required for the assembly of the diferric tyrosyl radical cofactor of ribonucleotide reductase (RNR), probably by providing electrons for reduction during radical cofactor maturation in the catalytic small subunit. The protein is Anamorsin homolog of Ricinus communis (Castor bean).